The following is a 499-amino-acid chain: Glycerol kinase (499 aa).

Threonine 13 lines the ADP pocket. ATP is bound by residues threonine 13, threonine 14, and serine 15. Position 13 (threonine 13) interacts with sn-glycerol 3-phosphate. Residue arginine 17 participates in ADP binding. Sn-glycerol 3-phosphate-binding residues include arginine 83, glutamate 84, tyrosine 135, and aspartate 245. 5 residues coordinate glycerol: arginine 83, glutamate 84, tyrosine 135, aspartate 245, and glutamine 246. Residues threonine 267 and glycine 310 each contribute to the ADP site. The ATP site is built by threonine 267, glycine 310, glutamine 314, and glycine 411. Positions 411 and 415 each coordinate ADP.

Belongs to the FGGY kinase family.

It carries out the reaction glycerol + ATP = sn-glycerol 3-phosphate + ADP + H(+). It participates in polyol metabolism; glycerol degradation via glycerol kinase pathway; sn-glycerol 3-phosphate from glycerol: step 1/1. Its activity is regulated as follows. Inhibited by fructose 1,6-bisphosphate (FBP). In terms of biological role, key enzyme in the regulation of glycerol uptake and metabolism. Catalyzes the phosphorylation of glycerol to yield sn-glycerol 3-phosphate. The sequence is that of Glycerol kinase from Xanthomonas campestris pv. campestris (strain 8004).